The primary structure comprises 161 residues: Nucleotide-binding protein XAC3671 (161 aa).

Belongs to the YajQ family.

Functionally, nucleotide-binding protein. The protein is Nucleotide-binding protein XAC3671 of Xanthomonas axonopodis pv. citri (strain 306).